The chain runs to 162 residues: Caveolin-2 (162 aa).

Over 1 to 86 (MGLETEKADV…FEISKYVIYK (86 aa)) the chain is Cytoplasmic. Tyr19 is subject to Phosphotyrosine; by SRC. 2 positions are modified to phosphoserine: Ser20 and Ser23. Tyr27 carries the post-translational modification Phosphotyrosine; by SRC. An intramembrane region (helical) is located at residues 87-107 (FLTVFLAIPLAFVAGILFATL). Topologically, residues 108–162 (SCLHIWIIMPFVKTCLMLLPSVQTIWKSVTDVVIAPLCTSAGRSFSSVSLQLSHD) are cytoplasmic.

This sequence belongs to the caveolin family. In terms of assembly, monomer or homodimer. Interacts with CAV1; the interaction forms a stable heterooligomeric complex that is required for targeting to lipid rafts and for caveolae formation. Tyrosine phosphorylated forms do not form heterooligomers with the Tyr-19-phosphorylated form existing as a monomer or dimer, and the Tyr-27-form as a monomer only. Interacts (tyrosine phosphorylated form) with the SH2 domain-containing proteins, RASA1, NCK1 and SRC. Interacts (tyrosine phosphorylated form) with INSR, the interaction (Tyr-27-phosphorylated form) is increased on insulin stimulation. Interacts (Tyr-19 phosphorylated form) with MAPK1 (phosphorylated form); the interaction, promoted by insulin, leads to nuclear location and MAPK1 activation. Interacts with STAT3; the interaction is increased on insulin-induced tyrosine phosphorylation leading to STAT activation. Post-translationally, phosphorylated on serine and tyrosine residues. CAV1 promotes phosphorylation on Ser-23 which then targets the complex to the plasma membrane, lipid rafts and caveolae. Phosphorylation on both Tyr-19 and Tyr-27 is required for insulin-induced 'Ser-727' phosphorylation of STAT3 and its activation. Phosphorylation on Tyr-19 is required for insulin-induced phosphorylation of MAPK1 and DNA binding of STAT3. Tyrosine phosphorylation is induced by both EGF and insulin.

Its subcellular location is the nucleus. It localises to the cytoplasm. It is found in the golgi apparatus membrane. The protein localises to the cell membrane. The protein resides in the membrane. Its subcellular location is the caveola. Functionally, may act as a scaffolding protein within caveolar membranes. Interacts directly with G-protein alpha subunits and can functionally regulate their activity. Acts as an accessory protein in conjunction with CAV1 in targeting to lipid rafts and driving caveolae formation. Positive regulator of cellular mitogenesis of the MAPK signaling pathway. Required for the insulin-stimulated nuclear translocation and activation of MAPK1 and STAT3, and the subsequent regulation of cell cycle progression. The polypeptide is Caveolin-2 (CAV2) (Equus caballus (Horse)).